We begin with the raw amino-acid sequence, 605 residues long: Class II receptor tyrosine kinase (605 aa).

The Ig-like C2-type domain maps to 1 to 67; the sequence is MWSSPGRNLE…DGESASFRVD (67 aa). Residues 1-84 lie on the Extracellular side of the membrane; sequence MWSSPGRNLE…GSNSGVIAGV (84 aa). Residues N26, N44, and N72 are each glycosylated (N-linked (GlcNAc...) asparagine). The helical transmembrane segment at 85–105 threads the bilayer; sequence LITLLLLIALIIILICVFWVV. Topologically, residues 106–605 are cytoplasmic; it reads WRYRRRGKFD…GRPRGVAGCV (500 aa). The segment at 209–230 is disordered; it reads EELSPIQEKPTRRNTGLSTYSQ. Residues 221–230 show a composition bias toward polar residues; that stretch reads RNTGLSTYSQ. The 260-residue stretch at 346–605 folds into the Protein kinase domain; it reads IREVKQIGVG…GRPRGVAGCV (260 aa). Residues 352–360 and K393 each bind ATP; that span reads IGVGQFGAV. Residue D496 is the Proton acceptor of the active site. Y527 is subject to Phosphotyrosine; by autocatalysis.

The protein belongs to the protein kinase superfamily. Tyr protein kinase family. Insulin receptor subfamily. Post-translationally, phosphorylated.

It localises to the cell membrane. It catalyses the reaction L-tyrosyl-[protein] + ATP = O-phospho-L-tyrosyl-[protein] + ADP + H(+). This chain is Class II receptor tyrosine kinase (TK), found in Geodia cydonium (Sponge).